The sequence spans 134 residues: RuBisCO chaperone RbcX (134 aa).

A disordered region spans residues 97–134 (SNGNHRRSLLERLTQVDSSSTDQTEPNPGESDTSEDSE). Residues 111–122 (QVDSSSTDQTEP) show a composition bias toward polar residues.

Belongs to the RbcX family. As to quaternary structure, homodimer (RbcX2). Interacts with the exposed C-terminal peptide of RbcL ('Glu-459-Asp-468'); binds 2 RbcL peptides per RbcX2, stapling them into an RbcL2 dimer. A slightly longer peptide binds with a higher affinity, but no long-term stable interaction with RbcL is detected. Contacts a second RbcL monomer via its peripheral polar surface.

The protein resides in the carboxysome. Its subcellular location is the cytoplasm. Functionally, an RbcL-specific chaperone. Required for assembly of the RbcL8 core, acting downstream of the major chaperonin (GroEL-GroES). Acts on newly folded RbcL, has a transient dynamic interaction with RbcL and is eventually displaced by RbcS. The central cleft of the RbcX homodimer (RbcX2) binds the C-terminus of an RbcL monomer, stabilizing the C-terminus and probably preventing its reassociation with chaperonin GroEL-ES. At the same time the peripheral region of RbcX2 binds a second RbcL monomer, bridging the RbcL homodimers in the correct orientation. The RbcX2(2)-bound RbcL dimers then assemble into the RbcL8 core (RbcL8-(RbcX2)8). RbcS binding triggers the release of RbcX2. Required for optimal reconstitution of RuBisCO into its RbcL8S8 holoenzyme form upon expression of rbcL-rbcS subunits in E.coli, and probably also in situ. A frameshift mutation that replaces half the protein reduces accumulation of both RbcL and RbcS subunits and halves activity of RuBisCO in situ and in E.coli. The protein is RuBisCO chaperone RbcX of Picosynechococcus sp. (strain ATCC 27264 / PCC 7002 / PR-6) (Agmenellum quadruplicatum).